Consider the following 529-residue polypeptide: Peptide chain release factor 3 (529 aa).

The 270-residue stretch at 11 to 280 (NKRRTFAIIS…GLVKWAPAPM (270 aa)) folds into the tr-type G domain. Residues 20–27 (SHPDAGKT), 88–92 (DTPGH), and 142–145 (NKLD) contribute to the GTP site.

This sequence belongs to the TRAFAC class translation factor GTPase superfamily. Classic translation factor GTPase family. PrfC subfamily.

It is found in the cytoplasm. Its function is as follows. Increases the formation of ribosomal termination complexes and stimulates activities of RF-1 and RF-2. It binds guanine nucleotides and has strong preference for UGA stop codons. It may interact directly with the ribosome. The stimulation of RF-1 and RF-2 is significantly reduced by GTP and GDP, but not by GMP. This chain is Peptide chain release factor 3, found in Proteus mirabilis (strain HI4320).